A 162-amino-acid chain; its full sequence is Phosphopantetheine adenylyltransferase (162 aa).

Serine 11 lines the substrate pocket. ATP-binding positions include 11-12 (SF) and histidine 19. Residues lysine 43, valine 76, and arginine 90 each coordinate substrate. ATP is bound by residues 91-93 (GLR), glutamate 101, and 126-132 (LKFVSSS).

It belongs to the bacterial CoaD family. Homohexamer. Requires Mg(2+) as cofactor.

It localises to the cytoplasm. The catalysed reaction is (R)-4'-phosphopantetheine + ATP + H(+) = 3'-dephospho-CoA + diphosphate. It functions in the pathway cofactor biosynthesis; coenzyme A biosynthesis; CoA from (R)-pantothenate: step 4/5. Functionally, reversibly transfers an adenylyl group from ATP to 4'-phosphopantetheine, yielding dephospho-CoA (dPCoA) and pyrophosphate. The polypeptide is Phosphopantetheine adenylyltransferase (Streptococcus suis (strain 05ZYH33)).